A 321-amino-acid polypeptide reads, in one-letter code: Small ribosomal subunit biogenesis GTPase RsgA (321 aa).

Residues 89-248 form the CP-type G domain; it reads QSWINRPPVA…VADTPGFNRP (160 aa). GTP is bound by residues 138–141 and 190–198; these read TKRD and GPSGVGKTS. Zn(2+) is bound by residues Cys273, Cys278, His280, and Cys286.

Belongs to the TRAFAC class YlqF/YawG GTPase family. RsgA subfamily. In terms of assembly, monomer. Associates with 30S ribosomal subunit, binds 16S rRNA. It depends on Zn(2+) as a cofactor.

It localises to the cytoplasm. In terms of biological role, one of several proteins that assist in the late maturation steps of the functional core of the 30S ribosomal subunit. Helps release RbfA from mature subunits. May play a role in the assembly of ribosomal proteins into the subunit. Circularly permuted GTPase that catalyzes slow GTP hydrolysis, GTPase activity is stimulated by the 30S ribosomal subunit. The sequence is that of Small ribosomal subunit biogenesis GTPase RsgA from Prochlorococcus marinus (strain MIT 9303).